The following is a 96-amino-acid chain: Integration host factor subunit beta (96 aa).

Residues 59-86 (RVGRNPKTGETVELDGKHVPHFKPGKEL) form a disordered region. The span at 72-86 (LDGKHVPHFKPGKEL) shows a compositional bias: basic and acidic residues.

It belongs to the bacterial histone-like protein family. Heterodimer of an alpha and a beta chain.

This protein is one of the two subunits of integration host factor, a specific DNA-binding protein that functions in genetic recombination as well as in transcriptional and translational control. This chain is Integration host factor subunit beta, found in Pseudoalteromonas atlantica (strain T6c / ATCC BAA-1087).